The sequence spans 92 residues: Small ribosomal subunit protein uS19c (92 aa).

The protein belongs to the universal ribosomal protein uS19 family.

The protein resides in the plastid. Its subcellular location is the chloroplast. Its function is as follows. Protein S19 forms a complex with S13 that binds strongly to the 16S ribosomal RNA. The protein is Small ribosomal subunit protein uS19c of Tupiella akineta (Green alga).